The following is a 69-amino-acid chain: Protein transport protein Sec61 subunit gamma-3 (69 aa).

N-acetylmethionine is present on Met1. Topologically, residues 1-32 (MEAIDSAIDPLRDFAKSSVRLVQRCHKPDRKE) are cytoplasmic. The chain crosses the membrane as a helical span at residues 33 to 61 (FTKVAVRTAIGFVVMGFVGFFVKLVFIPI). Over 62–69 (NNIIVGSS) the chain is Extracellular.

It belongs to the SecE/SEC61-gamma family. Heterotrimeric complex composed of SEC61-alpha, SEC61-beta and SEC61-gamma.

It is found in the endoplasmic reticulum membrane. In terms of biological role, necessary for protein translocation in the endoplasmic reticulum. This chain is Protein transport protein Sec61 subunit gamma-3 (SEC61G3), found in Arabidopsis thaliana (Mouse-ear cress).